Consider the following 217-residue polypeptide: Adenylate kinase (217 aa).

10–15 (GAGKGT) contacts ATP. The tract at residues 30 to 59 (STGDIFRAAMKNETPMGIEAKKYIDKGELV) is NMP. Residues T31, R36, 57-59 (ELV), 85-88 (GFPR), and Q92 each bind AMP. Residues 126-164 (GRFICRNCGATYHKLYNAPKVEGTCDVCGHHEFYQRDDD) are LID. R127 serves as a coordination point for ATP. Zn(2+) is bound by residues C130 and C133. ATP is bound at residue 136-137 (TY). Residues C150 and C153 each coordinate Zn(2+). Positions 161 and 172 each coordinate AMP. Q200 contacts ATP.

This sequence belongs to the adenylate kinase family. In terms of assembly, monomer.

The protein localises to the cytoplasm. The catalysed reaction is AMP + ATP = 2 ADP. Its pathway is purine metabolism; AMP biosynthesis via salvage pathway; AMP from ADP: step 1/1. In terms of biological role, catalyzes the reversible transfer of the terminal phosphate group between ATP and AMP. Plays an important role in cellular energy homeostasis and in adenine nucleotide metabolism. This Limosilactobacillus reuteri subsp. reuteri (strain JCM 1112) (Lactobacillus reuteri) protein is Adenylate kinase.